Reading from the N-terminus, the 353-residue chain is Elongation factor Ts (353 aa).

The interval 80–83 (TDFV) is involved in Mg(2+) ion dislocation from EF-Tu.

Belongs to the EF-Ts family.

The protein localises to the cytoplasm. In terms of biological role, associates with the EF-Tu.GDP complex and induces the exchange of GDP to GTP. It remains bound to the aminoacyl-tRNA.EF-Tu.GTP complex up to the GTP hydrolysis stage on the ribosome. The chain is Elongation factor Ts from Sulfurovum sp. (strain NBC37-1).